The sequence spans 161 residues: Endoribonuclease YbeY (161 aa).

3 residues coordinate Zn(2+): His121, His125, and His131.

Belongs to the endoribonuclease YbeY family. It depends on Zn(2+) as a cofactor.

It localises to the cytoplasm. Its function is as follows. Single strand-specific metallo-endoribonuclease involved in late-stage 70S ribosome quality control and in maturation of the 3' terminus of the 16S rRNA. The polypeptide is Endoribonuclease YbeY (Xanthomonas campestris pv. campestris (strain 8004)).